The following is a 122-amino-acid chain: Large ribosomal subunit protein uL14 (122 aa).

Belongs to the universal ribosomal protein uL14 family. In terms of assembly, part of the 50S ribosomal subunit. Forms a cluster with proteins L3 and L19. In the 70S ribosome, L14 and L19 interact and together make contacts with the 16S rRNA in bridges B5 and B8.

Functionally, binds to 23S rRNA. Forms part of two intersubunit bridges in the 70S ribosome. The sequence is that of Large ribosomal subunit protein uL14 from Acetivibrio thermocellus (strain ATCC 27405 / DSM 1237 / JCM 9322 / NBRC 103400 / NCIMB 10682 / NRRL B-4536 / VPI 7372) (Clostridium thermocellum).